A 103-amino-acid chain; its full sequence is Large ribosomal subunit protein bL21 (103 aa).

It belongs to the bacterial ribosomal protein bL21 family. Part of the 50S ribosomal subunit. Contacts protein L20.

In terms of biological role, this protein binds to 23S rRNA in the presence of protein L20. In Histophilus somni (strain 129Pt) (Haemophilus somnus), this protein is Large ribosomal subunit protein bL21.